Here is a 329-residue protein sequence, read N- to C-terminus: Isoaspartyl peptidase/L-asparaginase (329 aa).

Threonine 173 serves as the catalytic Nucleophile. Substrate is bound by residues 201-204 and 222-225; these read RVSD and TGVG.

It belongs to the Ntn-hydrolase family. In terms of assembly, heterotetramer of two alpha and two beta chains arranged as a dimer of alpha/beta heterodimers. Cleaved into an alpha and beta chain by autocatalysis; this activates the enzyme. The N-terminal residue of the beta subunit is responsible for the nucleophile hydrolase activity.

It carries out the reaction Cleavage of a beta-linked Asp residue from the N-terminus of a polypeptide.. Its function is as follows. Degrades proteins damaged by L-isoaspartyl residue formation (also known as beta-Asp residues). Probably performs the final step in the degradation of the reserve polymer cyanophycin (depolymerizes the building block L-beta-Asp-Arg). Also has L-asparaginase activity. In Synechocystis sp. (strain ATCC 27184 / PCC 6803 / Kazusa), this protein is Isoaspartyl peptidase/L-asparaginase.